The primary structure comprises 809 residues: MAMIIHDPVYKLWYAXRAKSNLPGLAPHKTESITTVLSLTNVKNKQATNSILLNKITDLVLGLKAFSIKSKGVRTTLRVNKHWITPKEFPRFVKLVVWCTRTQEHEDSFMKIIGKCDHIWQTAGPNFLFKYLKEVMRLSVRRIANIELEPSKKIFVKLNKFRFPNIIPLPICDQIIRDQNDQVLWASKRLIICLLTILSVHRVLPTKVVPDYSTIVDPFTGVSKTIDQKLLRKAIHLLNIKRVKQLKLKITGSMKAGPNGKISLLTSSVDALSFITQPTKIFTYLDFSVRVYKFRGLLLWMWMMCILLITLPYAIVSFMLGALIPIMGKLSVVYDQAGKARIVAITNSWIQTAFYSLHLHVFKLLKNIDQDGTFDQERPFKLLIKWLNEPTQKFYGFDLTAATDRLPIDLQVDILNIIFKNSPGSSWRSLLRIKYKSPQGFLTYAVGQPMGAYSSFAMLALTHHVIVQVAALNSGFTTRFTDYCILGDDIVIAHDTVASEYLKLMETLGLSISSGKSVISSEFTEFAKKLKGRNNFDIFYRSWFSIIHFEKQILHLCTVFELLRRGVCELYDLYPQYINKLPKIYLRYNLLIDWVVVAFTNQILIGDRPRADGIRLFDYFVGLEVIPPLLRIMLHTIKKDWNGLWNSIKYTLNKGFVVSQVRVGLPDWTELFLLPILPSTYIIIRDYCRSFNDLTKLFGEWWLLRFESESYQVSILDVIDRLAHTSIPNLDIHDKKKVKLTLDNLYKLSLIVNIPSGGARRYIEFLRFNGLKSPLIVERYIKDGIRIEKPLTLQGLHRSGDIQLGFKIS.

In terms of assembly, forms a ribonucleoprotein complex with the viral RNA. Since the viral RNA is not encapsidated, ribonucleoprotein complex formation appears to be the strategy to survive in the host as persistent virus.

It localises to the host mitochondrion. It catalyses the reaction RNA(n) + a ribonucleoside 5'-triphosphate = RNA(n+1) + diphosphate. In terms of biological role, RNA-directed RNA polymerase that replicates the viral (+) and (-) genome. This chain is RNA-directed RNA polymerase, found in Cryphonectria parasitica mitovirus 1 (strain American chestnut tree/New Jersey/NB631) (CMV1).